The primary structure comprises 265 residues: U6 snRNA phosphodiesterase 1 (265 aa).

Positions 1 to 67 are disordered; the sequence is MSAAPLVGYS…EGPVDDSAKH (67 aa). Over residues 20–32 the composition is skewed to basic and acidic residues; sequence AGARVRPGAEGRS. The active-site Proton acceptor is H120. 120 to 122 serves as a coordination point for AMP; that stretch reads HLS. UMP is bound by residues Q164, Y202, and 206-210; that span reads SFHIS. AMP-binding positions include Y202 and 204 to 210; that span reads DPSFHIS. H208 functions as the Proton donor in the catalytic mechanism.

Belongs to the 2H phosphoesterase superfamily. USB1 family. In terms of assembly, interacts with PLRG1, CDC5L and PRPF19.

The protein resides in the nucleus. The catalysed reaction is a 3'-end uridylyl-uridine-RNA = a 3'-end 2',3'-cyclophospho-uridine-RNA + uridine. It catalyses the reaction a 3'-end uridylyl-adenosine-RNA = a 3'-end 2',3'-cyclophospho-uridine-RNA + adenosine. Its function is as follows. 3'-5' RNA exonuclease that trims the 3' end of oligo(U) and oligo(A) tracts of the pre-U6 small nuclear RNA (snRNA) molecule, leading to the formation of a mature U6 snRNA 3' end-terminated with a 2',3'-cyclic phosphate. Participates in the U6 snRNA 3' end processing that prevents U6 snRNA degradation. In addition also removes uridines from the 3' end of U6atac snRNA and possibly the vault RNA VTRNA1-1. The chain is U6 snRNA phosphodiesterase 1 from Bos taurus (Bovine).